Here is a 79-residue protein sequence, read N- to C-terminus: ATP synthase subunit beta (79 aa).

The protein belongs to the ATPase alpha/beta chains family. F-type ATPases have 2 components, CF(1) - the catalytic core - and CF(0) - the membrane proton channel. CF(1) has five subunits: alpha(3), beta(3), gamma(1), delta(1), epsilon(1). CF(0) has three main subunits: a(1), b(2) and c(9-12). The alpha and beta chains form an alternating ring which encloses part of the gamma chain. CF(1) is attached to CF(0) by a central stalk formed by the gamma and epsilon chains, while a peripheral stalk is formed by the delta and b chains.

It is found in the cell membrane. It carries out the reaction ATP + H2O + 4 H(+)(in) = ADP + phosphate + 5 H(+)(out). Functionally, produces ATP from ADP in the presence of a proton gradient across the membrane. The catalytic sites are hosted primarily by the beta subunits. This Streptococcus downei (Streptococcus sobrinus) protein is ATP synthase subunit beta (atpD).